The chain runs to 480 residues: 2-phosphoxylose phosphatase 1 (480 aa).

Residues 1 to 6 (MLHRNR) lie on the Cytoplasmic side of the membrane. The helical; Signal-anchor for type II membrane protein transmembrane segment at 7-27 (FLVLLALAGLLAFLSLSLQFF) threads the bilayer. Over 28–480 (HLIPVSATKN…YYDACHGEGA (453 aa)) the chain is Lumenal. H97 (nucleophile) is an active-site residue. N-linked (GlcNAc...) asparagine glycans are attached at residues N194, N305, and N354. D379 serves as the catalytic Proton donor.

Belongs to the histidine acid phosphatase family. In terms of assembly, interacts with B3GAT3; the interaction increases the 2-phosphoxylose phosphatase activity of PXYLP1 during completion of linkage region formation in a B3GAT3-mediated manner.

It localises to the golgi apparatus membrane. It carries out the reaction 3-O-[beta-D-GlcA-(1-&gt;3)-beta-D-Gal-(1-&gt;3)-beta-D-Gal-(1-&gt;4)-beta-D-2-O-P-Xyl]-L-seryl-[protein] + H2O = 3-O-(beta-D-GlcA-(1-&gt;3)-beta-D-Gal-(1-&gt;3)-beta-D-Gal-(1-&gt;4)-beta-D-Xyl)-L-seryl-[protein] + phosphate. Its function is as follows. Responsible for the 2-O-dephosphorylation of xylose in the glycosaminoglycan-protein linkage region of proteoglycans thereby regulating the amount of mature glycosaminoglycan (GAG) chains. Sulfated glycosaminoglycans (GAGs), including heparan sulfate and chondroitin sulfate, are synthesized on the so-called common GAG-protein linkage region (GlcUAbeta1-3Galbeta1-3Galbeta1-4Xylbeta1-O-Ser) of core proteins, which is formed by the stepwise addition of monosaccharide residues by the respective specific glycosyltransferases. Xylose 2-O-dephosphorylation during completion of linkage region formation is a prerequisite for the initiation and efficient elongation of the repeating disaccharide region of GAG chains. The protein is 2-phosphoxylose phosphatase 1 of Mus musculus (Mouse).